Here is a 601-residue protein sequence, read N- to C-terminus: Elongation factor 4 (601 aa).

The tr-type G domain maps to 4–186 (SFIRNFAIIA…SIVHLVPPPK (183 aa)). Residues 16–21 (DHGKST) and 133–136 (NKID) each bind GTP.

The protein belongs to the TRAFAC class translation factor GTPase superfamily. Classic translation factor GTPase family. LepA subfamily.

It is found in the cell inner membrane. The enzyme catalyses GTP + H2O = GDP + phosphate + H(+). Required for accurate and efficient protein synthesis under certain stress conditions. May act as a fidelity factor of the translation reaction, by catalyzing a one-codon backward translocation of tRNAs on improperly translocated ribosomes. Back-translocation proceeds from a post-translocation (POST) complex to a pre-translocation (PRE) complex, thus giving elongation factor G a second chance to translocate the tRNAs correctly. Binds to ribosomes in a GTP-dependent manner. The polypeptide is Elongation factor 4 (Koribacter versatilis (strain Ellin345)).